The chain runs to 404 residues: MKARAEKIADGLYWTGVLDWDIRNYHGYTLQGTTYNAYLVFGDEGVALIDNSYPGTFQELMARMEDAFNREGREMRVDFIVQNHVERDHSGVLVELHRRFPEAEIHCTEVAVEGLLKHYPALEGTEFRTVKTGDSIDLGGRTLTFLEAPLLHWPDSMFTFLDTGILFSNDAFGQHLCYPQRLDTEIPEYILMDAAKKFYANLITPLSKLVLRKFDEVKELGLLDKIGMIAPSHGQIWTEPMKIIEAYTAWATGKVKKKVTVIYDTMHHSTAMMAHAIAEGAMSEGADVRVYYLHEDDRSEIVKDILDSHAIALGAPAIYDEPYPSVGDLLMYLRGLKFNRTGQRRAMVFGSMGGRGGATGTMQKLLADAGFDVMEADEIYYVPNNEELDACFEAGRRLAGDLNE.

Positions 84, 86, 88, 89, 152, 170, and 233 each coordinate Fe cation. A Flavodoxin-like domain is found at 259–399 (VTVIYDTMHH…ACFEAGRRLA (141 aa)). Residues 265–270 (TMHHST), 317–320 (AIYD), and 351–356 (SMGGRG) contribute to the FMN site.

In the N-terminal section; belongs to the zinc metallo-hydrolase group 3 family. It depends on FMN as a cofactor. The cofactor is Fe cation.

The enzyme catalyses 2 reduced coenzyme F420-(gamma-L-Glu)(n) + O2 = 2 oxidized coenzyme F420-(gamma-L-Glu)(n) + 2 H2O + 2 H(+). In terms of biological role, catalyzes the oxidation of F420H(2) with O(2). May be involved in O(2) detoxification, reducing the intracellular O(2) concentration to a level allowing growth at the expense of methane formation. This chain is Coenzyme F420H(2) oxidase, found in Methanothermobacter thermautotrophicus (strain ATCC 29096 / DSM 1053 / JCM 10044 / NBRC 100330 / Delta H) (Methanobacterium thermoautotrophicum).